The following is a 282-amino-acid chain: tRNA (guanine-N(7)-)-methyltransferase (282 aa).

A disordered region spans residues Met1 to Lys29. Over residues Lys10–Glu22 the composition is skewed to basic and acidic residues. S-adenosyl-L-methionine contacts are provided by residues Gly104, Asn153–Thr154, and Cys173. Residue Asp176 is part of the active site. Thr255–Glu257 provides a ligand contact to S-adenosyl-L-methionine.

Belongs to the class I-like SAM-binding methyltransferase superfamily. TrmB family. Forms a complex with TRM82.

The protein resides in the nucleus. It carries out the reaction guanosine(46) in tRNA + S-adenosyl-L-methionine = N(7)-methylguanosine(46) in tRNA + S-adenosyl-L-homocysteine. It participates in tRNA modification; N(7)-methylguanine-tRNA biosynthesis. Its function is as follows. Catalyzes the formation of N(7)-methylguanine at position 46 (m7G46) in tRNA. In Phaeosphaeria nodorum (strain SN15 / ATCC MYA-4574 / FGSC 10173) (Glume blotch fungus), this protein is tRNA (guanine-N(7)-)-methyltransferase.